The primary structure comprises 216 residues: PEP-dependent dihydroxyacetone kinase 2, ADP-binding subunit DhaL (216 aa).

Residues 9–210 form the DhaL domain; sequence AFFGHVLQDM…SWMLMNVILE (202 aa). Mg(2+)-binding residues include D33, D38, and D40. Residues 41–44, 84–85, G126, M135, R182, and 195–197 each bind ADP; these read HGIN, AS, and DPG.

Homodimer. The dihydroxyacetone kinase complex is composed of a homodimer of DhaM, a homodimer of DhaK and the subunit DhaL. The cofactor is Mg(2+).

It localises to the cytoplasm. It carries out the reaction dihydroxyacetone + phosphoenolpyruvate = dihydroxyacetone phosphate + pyruvate. It functions in the pathway polyol metabolism; glycerol degradation. Functionally, ADP-binding subunit of the dihydroxyacetone kinase, which is responsible for the phosphoenolpyruvate (PEP)-dependent phosphorylation of dihydroxyacetone. DhaL-ADP is converted to DhaL-ATP via a phosphoryl group transfer from DhaM and transmits it to dihydroxyacetone binds to DhaK. The protein is PEP-dependent dihydroxyacetone kinase 2, ADP-binding subunit DhaL of Listeria innocua serovar 6a (strain ATCC BAA-680 / CLIP 11262).